The following is a 314-amino-acid chain: Signal peptidase I (314 aa).

Residues 5–25 traverse the membrane as a helical segment; the sequence is LTIFLLISTLVTGIFWSFYCI. Topologically, residues 26–63 are cytoplasmic; the sequence is KSFKNYLINKKIINNNNFHQEKIEKSKNKTYFLKSLAS. Residues 64 to 84 form a helical membrane-spanning segment; that stretch reads FFPIFLAIFIIRSFIYEPFQI. The Extracellular portion of the chain corresponds to 85–314; sequence PSGSMMPTLL…IRINRIGSIH (230 aa). Catalysis depends on residues Ser88 and Lys143.

The protein belongs to the peptidase S26 family.

The protein localises to the cell membrane. The catalysed reaction is Cleavage of hydrophobic, N-terminal signal or leader sequences from secreted and periplasmic proteins.. This Buchnera aphidicola subsp. Acyrthosiphon pisum (strain APS) (Acyrthosiphon pisum symbiotic bacterium) protein is Signal peptidase I (lepB).